Reading from the N-terminus, the 354-residue chain is Carbonic anhydrase 12 (354 aa).

A signal peptide spans 1–24 (MPRRSLHAAAVLLLVILKEQPSSP). Over 25–301 (APVNGSKWTY…VQVCTAAGLS (277 aa)) the chain is Extracellular. N-linked (GlcNAc...) asparagine glycosylation is found at Asn-28 and Asn-80. In terms of domain architecture, Alpha-carbonic anhydrase spans 30–289 (SKWTYFGPDG…FDERLVYTSF (260 aa)). A disulfide bridge links Cys-50 with Cys-230. Residue His-94 is the Proton donor/acceptor of the active site. 3 residues coordinate Zn(2+): His-119, His-121, and His-145. Residue Asn-162 is glycosylated (N-linked (GlcNAc...) asparagine). 226–227 (TT) lines the substrate pocket. Residues 302-322 (LGIILSLALAGILGICIVVVV) traverse the membrane as a helical segment. Residues 323–354 (SIWLFRRKSIKKGDNKGVIYKPATKMETEAHA) are Cytoplasmic-facing.

Belongs to the alpha-carbonic anhydrase family. In terms of assembly, homodimer. The cofactor is Zn(2+). Highly expressed in colon, kidney, prostate, intestine and activated lymphocytes. Expressed at much higher levels in the renal cell cancers than in surrounding normal kidney tissue. Moderately expressed in pancreas, ovary and testis. Expressed in sweat glands and bronchiolar epithelium.

The protein localises to the membrane. Its subcellular location is the cell membrane. The enzyme catalyses hydrogencarbonate + H(+) = CO2 + H2O. Its activity is regulated as follows. Inhibited by coumarins, saccharin, sulfonamide derivatives such as acetazolamide (AZA), benzenesulfonamide and derivatives (4-carboxyethylbenzene-sulfonamide, 4-carboxyethylbenzene-sulfonamide ethyl ester, 4-(acetyl-2-aminoethyl)benzene-sulfonamide, 4-aminoethylbenzene-sulfonamide) and Foscarnet (phosphonoformate trisodium salt). Functionally, reversible hydration of carbon dioxide. This chain is Carbonic anhydrase 12, found in Homo sapiens (Human).